Reading from the N-terminus, the 1317-residue chain is Putative late blight resistance protein homolog R1B-14 (1317 aa).

2 coiled-coil regions span residues 419–442 (RYSDSLAFLKNQLQVIQTEFESLQ) and 535–556 (RMNEEIVGFKDVIENLRNRLLN). The NB-ARC domain occupies 521-823 (TVITHTSSQL…SESFIKSSEG (303 aa)). ATP is bound at residue 568-575 (GMPGLGKT). LRR repeat units lie at residues 944–968 (FKFLKVLDLEHQVVIDFIPTELFYL), 987–1015 (LWNLETLILKSTPVGRHNTLLLPSTIWDM), 1090–1114 (PIRLEILKLYRSKAFKTIPFCISAP), 1138–1161 (LKHLEVLKLCDLEFGDHREWKVSN), 1164–1186 (FPQLKILKLEYLSLMKWIVADDA), and 1187–1211 (FPNLEQLVLHGCQDLMEIPSCFMDI). The region spanning 1251 to 1317 (IKKMVLKFDI…VSKLRKRGML (67 aa)) is the HMA domain.

It belongs to the disease resistance NB-LRR family.

It localises to the cytoplasm. The protein resides in the membrane. Confers resistance to late blight (Phytophthora infestans) races carrying the avirulence gene Avr1. Resistance proteins guard the plant against pathogens that contain an appropriate avirulence protein via an indirect interaction with this avirulence protein. That triggers a defense system including the hypersensitive response, which restricts the pathogen growth. The polypeptide is Putative late blight resistance protein homolog R1B-14 (R1B-14) (Solanum demissum (Wild potato)).